A 799-amino-acid chain; its full sequence is Leucine--tRNA ligase (799 aa).

The 'HIGH' region signature appears at 39-50; it reads PYPSGAGLHMGH. Residues 575–579 carry the 'KMSKS' region motif; that stretch reads KMSKS. Residue lysine 578 participates in ATP binding.

It belongs to the class-I aminoacyl-tRNA synthetase family.

It is found in the cytoplasm. It catalyses the reaction tRNA(Leu) + L-leucine + ATP = L-leucyl-tRNA(Leu) + AMP + diphosphate. The protein is Leucine--tRNA ligase of Malacoplasma penetrans (strain HF-2) (Mycoplasma penetrans).